A 412-amino-acid polypeptide reads, in one-letter code: Serine hydroxymethyltransferase (412 aa).

(6S)-5,6,7,8-tetrahydrofolate is bound by residues Leu125 and 129–131 (GHL). Lys234 carries the post-translational modification N6-(pyridoxal phosphate)lysine. Glu250 contacts (6S)-5,6,7,8-tetrahydrofolate.

It belongs to the SHMT family. Homodimer. It depends on pyridoxal 5'-phosphate as a cofactor.

It localises to the cytoplasm. It carries out the reaction (6R)-5,10-methylene-5,6,7,8-tetrahydrofolate + glycine + H2O = (6S)-5,6,7,8-tetrahydrofolate + L-serine. Its pathway is one-carbon metabolism; tetrahydrofolate interconversion. The protein operates within amino-acid biosynthesis; glycine biosynthesis; glycine from L-serine: step 1/1. Functionally, catalyzes the reversible interconversion of serine and glycine with tetrahydrofolate (THF) serving as the one-carbon carrier. This reaction serves as the major source of one-carbon groups required for the biosynthesis of purines, thymidylate, methionine, and other important biomolecules. Also exhibits THF-independent aldolase activity toward beta-hydroxyamino acids, producing glycine and aldehydes, via a retro-aldol mechanism. This Deinococcus geothermalis (strain DSM 11300 / CIP 105573 / AG-3a) protein is Serine hydroxymethyltransferase.